The chain runs to 403 residues: Probable protein phosphatase 2C 8 (403 aa).

The tract at residues 42 to 80 is disordered; it reads LGRTASAVAEDDAAKRVRPASDSSSDSSESAKVAPEPTA. The span at 62-71 shows a compositional bias: low complexity; the sequence is SDSSSDSSES. The PPM-type phosphatase domain maps to 90-388; the sequence is SHGAVSVIGR…DNISVVVVEL (299 aa). Aspartate 144, glycine 145, aspartate 325, and aspartate 379 together coordinate Mn(2+).

It belongs to the PP2C family. Requires Mg(2+) as cofactor. Mn(2+) is required as a cofactor.

It carries out the reaction O-phospho-L-seryl-[protein] + H2O = L-seryl-[protein] + phosphate. It catalyses the reaction O-phospho-L-threonyl-[protein] + H2O = L-threonyl-[protein] + phosphate. This Oryza sativa subsp. japonica (Rice) protein is Probable protein phosphatase 2C 8.